The sequence spans 336 residues: Ribosomal RNA large subunit methyltransferase F (336 aa).

Belongs to the methyltransferase superfamily. METTL16/RlmF family.

The protein localises to the cytoplasm. The catalysed reaction is adenosine(1618) in 23S rRNA + S-adenosyl-L-methionine = N(6)-methyladenosine(1618) in 23S rRNA + S-adenosyl-L-homocysteine + H(+). In terms of biological role, specifically methylates the adenine in position 1618 of 23S rRNA. This is Ribosomal RNA large subunit methyltransferase F from Yersinia pestis (strain Pestoides F).